A 251-amino-acid polypeptide reads, in one-letter code: Capsid protein (251 aa).

Residues 3-20 (KRDLPWRSMAGTSKVSRN) carry the Bipartite nuclear localization signal motif. Positions 35-49 (KAAEWVNRPMYRKPR) match the Nuclear localization signal motif. A zinc finger spans residues 63 to 80 (CEGPCKVQSFEQRHDISH). The Nuclear export signal motif lies at 96-117 (ITHRVGKRFCVKSVYILGKIWM). The Bipartite nuclear localization signal signature appears at 195–242 (KRFWKVNNHVVYNHQEAGKYENHTENALLLYMACTHASNPVYATLKIR).

The protein belongs to the geminiviridae capsid protein family. Homomultimer. Binds to single-stranded and double-stranded viral DNA. Interacts (via nuclear localization signals) with host importin alpha-1a.

It localises to the virion. The protein localises to the host nucleus. Functionally, encapsidates the viral DNA into characteristic twinned ('geminate') particles. Binds the genomic viral ssDNA and shuttles it into and out of the cell nucleus. The CP of bipartite geminiviruses is not required for cell-to-cell or systemic movement. This chain is Capsid protein, found in Tomato mottle virus (isolate Florida) (ToMoV).